Consider the following 859-residue polypeptide: Envelope glycoprotein gp160 (859 aa).

The N-terminal stretch at 1–23 (MAYFSSRLPIALLLIGISGFVCK) is a signal peptide. At 24–678 (QYVTVFYGIP…WFDLTSWIKY (655 aa)) the chain is on the extracellular side. Asn37 is a glycosylation site (N-linked (GlcNAc...) asparagine; by host). Cysteines 44 and 57 form a disulfide. 24 N-linked (GlcNAc...) asparagine; by host glycosylation sites follow: Asn70, Asn112, Asn122, Asn142, Asn150, Asn165, Asn191, Asn206, Asn238, Asn241, Asn248, Asn272, Asn278, Asn289, Asn300, Asn310, Asn343, Asn367, Asn400, Asn410, Asn413, Asn450, Asn464, and Asn468. Disulfide bonds link Cys101–Cys214, Cys108–Cys205, Cys113–Cys164, Cys227–Cys257, and Cys237–Cys249. The V1 stretch occupies residues 113–163 (CSKTETNPGNASSTTTTKPTTTSRGLKTINETDPCIKNDSCTGLGEEEIMQ). Residues 164–205 (CNFSMTGLRRDELKQYKDTWYSEDLECNNTRKYTSRCYIRTC) form a V2 region. The tract at residues 305-337 (CKRPGNKTVVPIRTVSGLLFHSQPINKRPRQAW) is V3. Cys305 and Cys338 form a disulfide bridge. Disulfide bonds link Cys392-Cys449 and Cys399-Cys422. Residues 399–422 (CNMTWFLNWVENKTNTTRRNYAPC) form a V4 region. Residues 465 to 471 (STTNISV) are V5. Positions 514–534 (GVMVLGFLGFLAMAGSAMGAT) are fusion peptide. The interval 577 to 593 (LQARVTAIEKYLKDQAQ) is immunosuppression. N-linked (GlcNAc...) asparagine; by host glycans are attached at residues Asn613, Asn622, and Asn638. Positions 626 to 647 (QQWEKQVHFLDANITALLEEAQ) form a coiled coil. The tract at residues 659–680 (KINSWDVFGNWFDLTSWIKYIH) is MPER; binding to GalCer. Residues 679–699 (IHLGLYIVAGLVVLRIVVYIV) form a helical membrane-spanning segment. Topologically, residues 700 to 859 (QMLARLRKGY…IRQGLELTLL (160 aa)) are cytoplasmic. The short motif at 709–712 (YRPV) is the YXXV motif; contains endocytosis signal element. Residues 715 to 744 (SPPSYTQQIPIRKDRGQPANEETEEGGGND) are disordered. Residue Cys775 is the site of S-palmitoyl cysteine; by host attachment. A Di-leucine internalization motif motif is present at residues 858–859 (LL).

The mature envelope protein (Env) consists of a homotrimer of non-covalently associated gp120-gp41 heterodimers. The resulting complex protrudes from the virus surface as a spike. There seems to be as few as 10 spikes on the average virion. Interacts with human CD4, CCR5 and CXCR4, to form a P4HB/PDI-CD4-CXCR4-gp120 complex. Gp120 also interacts with the C-type lectins CD209/DC-SIGN and CLEC4M/DC-SIGNR (collectively referred to as DC-SIGN(R)). Gp120 and gp41 interact with GalCer. In terms of assembly, the mature envelope protein (Env) consists of a homotrimer of non-covalently associated gp120-gp41 heterodimers. The resulting complex protrudes from the virus surface as a spike. There seems to be as few as 10 spikes on the average virion. Specific enzymatic cleavages in vivo yield mature proteins. Envelope glycoproteins are synthesized as an inactive precursor that is heavily N-glycosylated and processed likely by host cell furin in the Golgi to yield the mature SU and TM proteins. The cleavage site between SU and TM requires the minimal sequence [KR]-X-[KR]-R. In terms of processing, palmitoylation of the transmembrane protein and of Env polyprotein (prior to its proteolytic cleavage) is essential for their association with host cell membrane lipid rafts. Palmitoylation is therefore required for envelope trafficking to classical lipid rafts, but not for viral replication.

Its subcellular location is the virion membrane. It localises to the host cell membrane. The protein resides in the host endosome membrane. Its function is as follows. The surface protein gp120 (SU) attaches the virus to the host lymphoid cell by binding to the primary receptor CD4. This interaction induces a structural rearrangement creating a high affinity binding site for a chemokine coreceptor like CXCR4 and/or CCR5. This peculiar 2 stage receptor-interaction strategy allows gp120 to maintain the highly conserved coreceptor-binding site in a cryptic conformation, protected from neutralizing antibodies. Since CD4 also displays a binding site for the disulfide-isomerase P4HB/PDI, a P4HB/PDI-CD4-CXCR4-gp120 complex may form. In that complex, P4HB/PDI could reach and reduce gp120 disulfide bonds, causing major conformational changes in gp120. TXN, another PDI family member could also be involved in disulfide rearrangements in Env during fusion. These changes are transmitted to the transmembrane protein gp41 and are thought to activate its fusogenic potential by unmasking its fusion peptide. The surface protein gp120 is a ligand for CD209/DC-SIGN and CLEC4M/DC-SIGNR, which are respectively found on dendritic cells (DCs), and on endothelial cells of liver sinusoids and lymph node sinuses. These interactions allow capture of viral particles at mucosal surfaces by these cells and subsequent transmission to permissive cells. DCs are professional antigen presenting cells, critical for host immunity by inducing specific immune responses against a broad variety of pathogens. They act as sentinels in various tissues where they take up antigen, process it, and present it to T-cells following migration to lymphoid organs. HIV subverts the migration properties of dendritic cells to gain access to CD4+ T-cells in lymph nodes. Virus transmission to permissive T-cells occurs either in trans (without DCs infection, through viral capture and transmission), or in cis (following DCs productive infection, through the usual CD4-gp120 interaction), thereby inducing a robust infection. In trans infection, bound virions remain infectious over days and it is proposed that they are not degraded, but protected in non-lysosomal acidic organelles within the DCs close to the cell membrane thus contributing to the viral infectious potential during DCs' migration from the periphery to the lymphoid tissues. On arrival at lymphoid tissues, intact virions recycle back to DCs' cell surface allowing virus transmission to CD4+ T-cells. Virion capture also seems to lead to MHC-II-restricted viral antigen presentation, and probably to the activation of HIV-specific CD4+ cells. Functionally, the transmembrane protein gp41 (TM) acts as a class I viral fusion protein. Under the current model, the protein has at least 3 conformational states: pre-fusion native state, pre-hairpin intermediate state, and post-fusion hairpin state. During fusion of viral and target intracellular membranes, the coiled coil regions (heptad repeats) assume a trimer-of-hairpins structure, positioning the fusion peptide in close proximity to the C-terminal region of the ectodomain. The formation of this structure appears to drive apposition and subsequent fusion of viral and target cell membranes. Complete fusion occurs in host cell endosomes and is dynamin-dependent, however some lipid transfer might occur at the plasma membrane. The virus undergoes clathrin-dependent internalization long before endosomal fusion, thus minimizing the surface exposure of conserved viral epitopes during fusion and reducing the efficacy of inhibitors targeting these epitopes. Membranes fusion leads to delivery of the nucleocapsid into the cytoplasm. In terms of biological role, the envelope glycoprotein gp160 precursor down-modulates cell surface CD4 antigen by interacting with it in the endoplasmic reticulum and blocking its transport to the cell surface. Its function is as follows. The gp120-gp41 heterodimer seems to contribute to T-cell depletion during HIV-1 infection. The envelope glycoproteins expressed on the surface of infected cells induce apoptosis through an interaction with uninfected cells expressing the receptor (CD4) and the coreceptors CXCR4 or CCR5. This type of bystander killing may be obtained by at least three distinct mechanisms. First, the interaction between the 2 cells can induce cellular fusion followed by nuclear fusion within the syncytium. Syncytia are condemned to die from apoptosis. Second, the 2 interacting cells may not fuse entirely and simply exchange plasma membrane lipids, after a sort of hemifusion process, followed by rapid death. Third, it is possible that virus-infected cells, on the point of undergoing apoptosis, fuse with CD4-expressing cells, in which case apoptosis is rapidly transmitted from one cell to the other and thus occurs in a sort of contagious fashion. The gp120-gp41 heterodimer allows rapid transcytosis of the virus through CD4 negative cells such as simple epithelial monolayers of the intestinal, rectal and endocervical epithelial barriers. Both gp120 and gp41 specifically recognize glycosphingolipids galactosyl-ceramide (GalCer) or 3' sulfo-galactosyl-ceramide (GalS) present in the lipid rafts structures of epithelial cells. Binding to these alternative receptors allows the rapid transcytosis of the virus through the epithelial cells. This transcytotic vesicle-mediated transport of virions from the apical side to the basolateral side of the epithelial cells does not involve infection of the cells themselves. The sequence is that of Envelope glycoprotein gp160 (env) from Human immunodeficiency virus type 2 subtype B (isolate D205) (HIV-2).